The sequence spans 805 residues: U-box domain-containing protein 70 (805 aa).

TPR repeat units lie at residues 15-48 (ARRE…DPRD), 49-82 (ISFL…GREL), 90-127 (ARAL…HYSE), 129-153 (TLAK…DQEA), 154-187 (ADHH…NPKD), 189-221 (RVFS…DPTF), and 222-255 (LKGY…DPNN). The tract at residues 136–160 (AEEARKEIEERERLDQEAADHHRDR) is disordered. Residues 341-417 (RKETEESLSR…VREVEELRQK (77 aa)) adopt a coiled-coil conformation. One can recognise a Protein kinase domain in the interval 445-711 (FSNSLKIGEG…GEVWAIVEAI (267 aa)). ATP contacts are provided by residues 451 to 459 (IGEGGFGCV) and K472. D567 serves as the catalytic Proton acceptor. A U-box domain is found at 730–804 (SPPSYFICPI…QEWLQQHSMS (75 aa)).

Belongs to the protein kinase superfamily. Ser/Thr protein kinase family. Interacts with MODD.

It catalyses the reaction L-seryl-[protein] + ATP = O-phospho-L-seryl-[protein] + ADP + H(+). The enzyme catalyses L-threonyl-[protein] + ATP = O-phospho-L-threonyl-[protein] + ADP + H(+). It carries out the reaction S-ubiquitinyl-[E2 ubiquitin-conjugating enzyme]-L-cysteine + [acceptor protein]-L-lysine = [E2 ubiquitin-conjugating enzyme]-L-cysteine + N(6)-ubiquitinyl-[acceptor protein]-L-lysine.. It participates in protein modification; protein ubiquitination. Functionally, functions as an E3 ubiquitin ligase. Is recruited by MODD to promote ubiquitination of BZIP46, a positive regulator of abscisic acid (ABA) signaling and drought stress tolerance. This is U-box domain-containing protein 70 from Oryza sativa subsp. japonica (Rice).